The primary structure comprises 138 residues: Small ribosomal subunit protein uS11c (138 aa).

A disordered region spans residues 1 to 21 (MTKAIQKIGSRRNGRIASRKN). Basic residues predominate over residues 9 to 21 (GSRRNGRIASRKN).

It belongs to the universal ribosomal protein uS11 family. In terms of assembly, part of the 30S ribosomal subunit.

It is found in the plastid. It localises to the chloroplast. The sequence is that of Small ribosomal subunit protein uS11c from Ceratophyllum demersum (Rigid hornwort).